We begin with the raw amino-acid sequence, 70 residues long: Small ribosomal subunit protein bS21B (70 aa).

The protein belongs to the bacterial ribosomal protein bS21 family.

This chain is Small ribosomal subunit protein bS21B, found in Cupriavidus metallidurans (strain ATCC 43123 / DSM 2839 / NBRC 102507 / CH34) (Ralstonia metallidurans).